The primary structure comprises 546 residues: Chaperonin GroEL 1 (546 aa).

Residues threonine 30–proline 33, lysine 51, aspartate 87–threonine 91, glycine 415, asparagine 479–alanine 481, and aspartate 495 each bind ATP.

It belongs to the chaperonin (HSP60) family. As to quaternary structure, forms a cylinder of 14 subunits composed of two heptameric rings stacked back-to-back. Interacts with the co-chaperonin GroES.

The protein resides in the cytoplasm. The catalysed reaction is ATP + H2O + a folded polypeptide = ADP + phosphate + an unfolded polypeptide.. Its function is as follows. Together with its co-chaperonin GroES, plays an essential role in assisting protein folding. The GroEL-GroES system forms a nano-cage that allows encapsulation of the non-native substrate proteins and provides a physical environment optimized to promote and accelerate protein folding. In Vibrio vulnificus (strain CMCP6), this protein is Chaperonin GroEL 1.